A 125-amino-acid chain; its full sequence is Large ribosomal subunit protein eL31 (125 aa).

This sequence belongs to the eukaryotic ribosomal protein eL31 family. Component of the large ribosomal subunit.

It localises to the cytoplasm. In terms of biological role, component of the large ribosomal subunit. The ribosome is a large ribonucleoprotein complex responsible for the synthesis of proteins in the cell. This chain is Large ribosomal subunit protein eL31 (rpl31), found in Ictalurus punctatus (Channel catfish).